The following is a 186-amino-acid chain: Crossover junction endodeoxyribonuclease RuvC (186 aa).

Catalysis depends on residues D14, E73, and D145. Mg(2+) is bound by residues D14, E73, and D145. Residues 162–186 (GRSLPPSRGRRRSGSRQRWRDYRPS) are disordered. Residues 169–178 (RGRRRSGSRQ) are compositionally biased toward basic residues.

This sequence belongs to the RuvC family. In terms of assembly, homodimer which binds Holliday junction (HJ) DNA. The HJ becomes 2-fold symmetrical on binding to RuvC with unstacked arms; it has a different conformation from HJ DNA in complex with RuvA. In the full resolvosome a probable DNA-RuvA(4)-RuvB(12)-RuvC(2) complex forms which resolves the HJ. The cofactor is Mg(2+).

It is found in the cytoplasm. The enzyme catalyses Endonucleolytic cleavage at a junction such as a reciprocal single-stranded crossover between two homologous DNA duplexes (Holliday junction).. Functionally, the RuvA-RuvB-RuvC complex processes Holliday junction (HJ) DNA during genetic recombination and DNA repair. Endonuclease that resolves HJ intermediates. Cleaves cruciform DNA by making single-stranded nicks across the HJ at symmetrical positions within the homologous arms, yielding a 5'-phosphate and a 3'-hydroxyl group; requires a central core of homology in the junction. The consensus cleavage sequence is 5'-(A/T)TT(C/G)-3'. Cleavage occurs on the 3'-side of the TT dinucleotide at the point of strand exchange. HJ branch migration catalyzed by RuvA-RuvB allows RuvC to scan DNA until it finds its consensus sequence, where it cleaves and resolves the cruciform DNA. In Chromohalobacter salexigens (strain ATCC BAA-138 / DSM 3043 / CIP 106854 / NCIMB 13768 / 1H11), this protein is Crossover junction endodeoxyribonuclease RuvC.